A 178-amino-acid polypeptide reads, in one-letter code: MAKYRKLGRTSSQRKALLRSQVTALIENGKIVTTEARAKEVKKMAEKLITLAVKEKDNFETVKVSAKVPKKDAEGKRVKEVVDGKKVTVYETVEKEIKKDLPSRLHARKQMDKVLYTVTEVPTAAAGKKKNTKTVDLTNKLFDEIAPKYAGRQGGYTRIVKIGLRKGDAAMEVLLELV.

It belongs to the bacterial ribosomal protein bL17 family. As to quaternary structure, part of the 50S ribosomal subunit. Contacts protein L32.

This chain is Large ribosomal subunit protein bL17, found in Lachnospira eligens (strain ATCC 27750 / DSM 3376 / VPI C15-48 / C15-B4) (Eubacterium eligens).